The following is a 185-amino-acid chain: Ribosome-recycling factor (185 aa).

Positions 135 to 159 are disordered; sequence ANDKLKASEKNKEASEDEVKRAQEK.

Belongs to the RRF family.

The protein localises to the cytoplasm. In terms of biological role, responsible for the release of ribosomes from messenger RNA at the termination of protein biosynthesis. May increase the efficiency of translation by recycling ribosomes from one round of translation to another. In Moorella thermoacetica (strain ATCC 39073 / JCM 9320), this protein is Ribosome-recycling factor.